Reading from the N-terminus, the 535-residue chain is Xylan 1,3-beta-xylosidase (535 aa).

The active-site Proton acceptor is D16. Catalysis depends on E189, which acts as the Proton donor.

This sequence belongs to the glycosyl hydrolase 43 family.

It carries out the reaction Hydrolysis of successive xylose residues from the non-reducing termini of (1-&gt;3)-beta-D-xylans.. With respect to regulation, inhibited by Ag(+), Cu(2+), Hg(2+), Mn(2+), Pb(2+), Zn(2+) and p-chloromercuric benzoic acid. Its function is as follows. Beta-1,3-xylosidase that hydrolyzes beta-1,3-xylooligosaccharides to D-xylose. The chain is Xylan 1,3-beta-xylosidase (xloA) from Vibrio sp.